The sequence spans 194 residues: Holliday junction branch migration complex subunit RuvA (194 aa).

A domain I region spans residues 1–64 (MIARLSGILV…EDAQLLYGFG (64 aa)). A domain II region spans residues 65-141 (SDQERATFRQ…FAIDGGTALA (77 aa)). Residues 141-144 (AGSN) are flexible linker. The interval 145–194 (PAKSASSDVLNALLALGYNEREALAAVKQLPADIAVAEGIKLSLKSLSKT) is domain III.

This sequence belongs to the RuvA family. Homotetramer. Forms an RuvA(8)-RuvB(12)-Holliday junction (HJ) complex. HJ DNA is sandwiched between 2 RuvA tetramers; dsDNA enters through RuvA and exits via RuvB. An RuvB hexamer assembles on each DNA strand where it exits the tetramer. Each RuvB hexamer is contacted by two RuvA subunits (via domain III) on 2 adjacent RuvB subunits; this complex drives branch migration. In the full resolvosome a probable DNA-RuvA(4)-RuvB(12)-RuvC(2) complex forms which resolves the HJ.

Its subcellular location is the cytoplasm. Its function is as follows. The RuvA-RuvB-RuvC complex processes Holliday junction (HJ) DNA during genetic recombination and DNA repair, while the RuvA-RuvB complex plays an important role in the rescue of blocked DNA replication forks via replication fork reversal (RFR). RuvA specifically binds to HJ cruciform DNA, conferring on it an open structure. The RuvB hexamer acts as an ATP-dependent pump, pulling dsDNA into and through the RuvAB complex. HJ branch migration allows RuvC to scan DNA until it finds its consensus sequence, where it cleaves and resolves the cruciform DNA. The polypeptide is Holliday junction branch migration complex subunit RuvA (Methylobacillus flagellatus (strain ATCC 51484 / DSM 6875 / VKM B-1610 / KT)).